The following is a 547-amino-acid chain: Chaperonin GroEL (547 aa).

ATP contacts are provided by residues 30–33 (TLGP), lysine 51, 87–91 (DGTTT), glycine 415, and aspartate 496.

The protein belongs to the chaperonin (HSP60) family. As to quaternary structure, forms a cylinder of 14 subunits composed of two heptameric rings stacked back-to-back. Interacts with the co-chaperonin GroES.

The protein resides in the cytoplasm. The enzyme catalyses ATP + H2O + a folded polypeptide = ADP + phosphate + an unfolded polypeptide.. Functionally, together with its co-chaperonin GroES, plays an essential role in assisting protein folding. The GroEL-GroES system forms a nano-cage that allows encapsulation of the non-native substrate proteins and provides a physical environment optimized to promote and accelerate protein folding. This is Chaperonin GroEL from Chlorobium phaeobacteroides (strain DSM 266 / SMG 266 / 2430).